The primary structure comprises 363 residues: Spore germination protein YndE (363 aa).

The next 10 membrane-spanning stretches (helical) occupy residues 8–28, 41–61, 84–104, 113–133, 149–169, 189–209, 218–238, 273–293, 305–325, and 335–355; these read ITTA…GVLT, DGWI…MIIA, LGHL…AFEV, FFLL…WIGL, MIFP…LGIF, VKTT…VAFM, AVVI…IMVI, FLLV…FYAA, PLSC…MPKN, and TVSH…LVIS.

The protein belongs to the amino acid-polyamine-organocation (APC) superfamily. Spore germination protein (SGP) (TC 2.A.3.9) family.

The protein localises to the cell membrane. Functionally, involved in the germinative response to L-alanine. Could be an amino acid transporter. In Bacillus subtilis (strain 168), this protein is Spore germination protein YndE (yndE).